A 135-amino-acid polypeptide reads, in one-letter code: Protein PsiE homolog (135 aa).

Transmembrane regions (helical) follow at residues 20–40 (VGLIALAAILVVFLIKETFHL), 54–74 (YMLIEGIVIYFLYFEFIALIV), 82–102 (HFPLRYFIYIGITAIIRLIIV), and 107–127 (PIDTLIYSGSILLLVVTLYLA).

Belongs to the PsiE family.

Its subcellular location is the cell inner membrane. This is Protein PsiE homolog from Yersinia enterocolitica serotype O:8 / biotype 1B (strain NCTC 13174 / 8081).